The chain runs to 373 residues: Dual-specificity RNA methyltransferase RlmN (373 aa).

The Proton acceptor role is filled by Glu-94. The Radical SAM core domain occupies 100–339; it reads EDDRATLCVS…VIVRKTRGDD (240 aa). Cys-107 and Cys-344 are disulfide-bonded. Residues Cys-114, Cys-118, and Cys-121 each coordinate [4Fe-4S] cluster. Residues 168–169, Ser-200, 222–224, and Asn-301 contribute to the S-adenosyl-L-methionine site; these read GE and SIH. Cys-344 (S-methylcysteine intermediate) is an active-site residue.

The protein belongs to the radical SAM superfamily. RlmN family. [4Fe-4S] cluster is required as a cofactor.

It is found in the cytoplasm. The enzyme catalyses adenosine(2503) in 23S rRNA + 2 reduced [2Fe-2S]-[ferredoxin] + 2 S-adenosyl-L-methionine = 2-methyladenosine(2503) in 23S rRNA + 5'-deoxyadenosine + L-methionine + 2 oxidized [2Fe-2S]-[ferredoxin] + S-adenosyl-L-homocysteine. It carries out the reaction adenosine(37) in tRNA + 2 reduced [2Fe-2S]-[ferredoxin] + 2 S-adenosyl-L-methionine = 2-methyladenosine(37) in tRNA + 5'-deoxyadenosine + L-methionine + 2 oxidized [2Fe-2S]-[ferredoxin] + S-adenosyl-L-homocysteine. In terms of biological role, specifically methylates position 2 of adenine 2503 in 23S rRNA and position 2 of adenine 37 in tRNAs. m2A2503 modification seems to play a crucial role in the proofreading step occurring at the peptidyl transferase center and thus would serve to optimize ribosomal fidelity. In Shewanella putrefaciens (strain CN-32 / ATCC BAA-453), this protein is Dual-specificity RNA methyltransferase RlmN.